Consider the following 930-residue polypeptide: Translation initiation factor IF-2 (930 aa).

Residues 29–316 (GEFVKSASST…GRKSKRAKRA (288 aa)) form a disordered region. Over residues 81 to 120 (RPGPKPGPPVAQQPAAPAAPPAAPPAPPTPAAAPPSPAPA) the composition is skewed to pro residues. Over residues 121–135 (APAAATPAEPAAPSA) the composition is skewed to low complexity. Pro residues-rich tracts occupy residues 136 to 155 (RPGPTPGPRPGPSAPKPGAP) and 180 to 191 (PRPQGPGGPRPG). Over residues 192–204 (PGAGGPRPGGGPR) the composition is skewed to gly residues. Residues 228–240 (GGGPRPGGGPRPT) are compositionally biased toward pro residues. Gly residues predominate over residues 241 to 301 (PGGAGRPGGG…GAAGAFGRPG (61 aa)). Positions 305–314 (KRGRKSKRAK) are enriched in basic residues. The tr-type G domain maps to 426–598 (IRPPVVTVMG…VILTADASLD (173 aa)). Residues 435–442 (GHVDHGKT) form a G1 region. Position 435-442 (435-442 (GHVDHGKT)) interacts with GTP. A G2 region spans residues 460 to 464 (GITQH). The interval 485 to 488 (DTPG) is G3. Residues 485–489 (DTPGH) and 539–542 (NKID) each bind GTP. The interval 539-542 (NKID) is G4. The tract at residues 575–577 (SAK) is G5.

It belongs to the TRAFAC class translation factor GTPase superfamily. Classic translation factor GTPase family. IF-2 subfamily.

It localises to the cytoplasm. Functionally, one of the essential components for the initiation of protein synthesis. Protects formylmethionyl-tRNA from spontaneous hydrolysis and promotes its binding to the 30S ribosomal subunits. Also involved in the hydrolysis of GTP during the formation of the 70S ribosomal complex. The sequence is that of Translation initiation factor IF-2 from Mycolicibacterium vanbaalenii (strain DSM 7251 / JCM 13017 / BCRC 16820 / KCTC 9966 / NRRL B-24157 / PYR-1) (Mycobacterium vanbaalenii).